The sequence spans 89 residues: Defensin-like protein 78 (89 aa).

A signal peptide spans 1–30 (MANNMVASPYKNTFMMIALVLILLISGSEA). 4 disulfides stabilise this stretch: Cys40/Cys75, Cys44/Cys67, Cys52/Cys73, and Cys56/Cys74.

This sequence belongs to the DEFL family.

Its subcellular location is the secreted. This chain is Defensin-like protein 78, found in Arabidopsis thaliana (Mouse-ear cress).